The following is a 295-amino-acid chain: 4-hydroxy-tetrahydrodipicolinate synthase (295 aa).

Position 46 (threonine 46) interacts with pyruvate. Tyrosine 135 functions as the Proton donor/acceptor in the catalytic mechanism. Lysine 164 serves as the catalytic Schiff-base intermediate with substrate. Isoleucine 205 contacts pyruvate.

Belongs to the DapA family. As to quaternary structure, homotetramer; dimer of dimers.

The protein resides in the cytoplasm. The catalysed reaction is L-aspartate 4-semialdehyde + pyruvate = (2S,4S)-4-hydroxy-2,3,4,5-tetrahydrodipicolinate + H2O + H(+). It participates in amino-acid biosynthesis; L-lysine biosynthesis via DAP pathway; (S)-tetrahydrodipicolinate from L-aspartate: step 3/4. Functionally, catalyzes the condensation of (S)-aspartate-beta-semialdehyde [(S)-ASA] and pyruvate to 4-hydroxy-tetrahydrodipicolinate (HTPA). The protein is 4-hydroxy-tetrahydrodipicolinate synthase of Wolinella succinogenes (strain ATCC 29543 / DSM 1740 / CCUG 13145 / JCM 31913 / LMG 7466 / NCTC 11488 / FDC 602W) (Vibrio succinogenes).